The primary structure comprises 238 residues: Probable transcriptional regulatory protein SSU05_0402 (238 aa).

This sequence belongs to the TACO1 family. YeeN subfamily.

It is found in the cytoplasm. The sequence is that of Probable transcriptional regulatory protein SSU05_0402 from Streptococcus suis (strain 05ZYH33).